An 84-amino-acid chain; its full sequence is Cell division topological specificity factor (84 aa).

Belongs to the MinE family.

Prevents the cell division inhibition by proteins MinC and MinD at internal division sites while permitting inhibition at polar sites. This ensures cell division at the proper site by restricting the formation of a division septum at the midpoint of the long axis of the cell. The polypeptide is Cell division topological specificity factor (Cupriavidus necator (strain ATCC 17699 / DSM 428 / KCTC 22496 / NCIMB 10442 / H16 / Stanier 337) (Ralstonia eutropha)).